Reading from the N-terminus, the 297-residue chain is MATLLSAQRAGWRDYLELTKPKVVVLMLITSLVGMFLATRAGVPWSVLLFGNLGIALCAGGAAAVNHVLDRRIDALMARTHKRPLAEGRVAPLPALLFALALALLGMALLLMFTNALTAWLTLASLLGYAVLYTGFLKRATPQNIVIGGLAGAAPPLLGWVAVSGHVSAEPLLLVLIIFAWTPPHFWALAIHRKEEYAKADIPMLPVTHGERYTKLHILLYTLILLAVTLLPYAIHMSGPLYLVCALALGLRFLQWAWVLYRGSRPHAAIGTFKYSIGYLFALFIALLVDHYLLLNL.

9 helical membrane passes run 23–43 (VVVL…RAGV), 45–65 (WSVL…AAAV), 93–113 (LPAL…LLMF), 117–137 (LTAW…TGFL), 145–165 (IVIG…AVSG), 171–191 (PLLL…ALAI), 216–236 (LHIL…YAIH), 241–261 (LYLV…WVLY), and 277–297 (IGYL…LLNL).

It belongs to the UbiA prenyltransferase family. Protoheme IX farnesyltransferase subfamily.

Its subcellular location is the cell inner membrane. It catalyses the reaction heme b + (2E,6E)-farnesyl diphosphate + H2O = Fe(II)-heme o + diphosphate. It functions in the pathway porphyrin-containing compound metabolism; heme O biosynthesis; heme O from protoheme: step 1/1. Converts heme B (protoheme IX) to heme O by substitution of the vinyl group on carbon 2 of heme B porphyrin ring with a hydroxyethyl farnesyl side group. This chain is Protoheme IX farnesyltransferase 1, found in Pseudomonas putida (strain W619).